A 679-amino-acid chain; its full sequence is DNA ligase (679 aa).

Residues 36-40 and 94-95 contribute to the NAD(+) site; these read DEYYD and SL. Catalysis depends on K126, which acts as the N6-AMP-lysine intermediate. Residues R147, E181, K299, and K323 each contribute to the NAD(+) site. C415, C418, C433, and C438 together coordinate Zn(2+). Residues 603–679 form the BRCT domain; that stretch reads IQSTKLENKT…DEEFLKKMLE (77 aa).

Belongs to the NAD-dependent DNA ligase family. LigA subfamily. Mg(2+) serves as cofactor. The cofactor is Mn(2+).

The enzyme catalyses NAD(+) + (deoxyribonucleotide)n-3'-hydroxyl + 5'-phospho-(deoxyribonucleotide)m = (deoxyribonucleotide)n+m + AMP + beta-nicotinamide D-nucleotide.. In terms of biological role, DNA ligase that catalyzes the formation of phosphodiester linkages between 5'-phosphoryl and 3'-hydroxyl groups in double-stranded DNA using NAD as a coenzyme and as the energy source for the reaction. It is essential for DNA replication and repair of damaged DNA. The polypeptide is DNA ligase (Mycoplasmopsis pulmonis (strain UAB CTIP) (Mycoplasma pulmonis)).